The primary structure comprises 480 residues: Cysteine--tRNA ligase (480 aa).

Cysteine 29 contributes to the Zn(2+) binding site. A 'HIGH' region motif is present at residues 31 to 41 (ITVYDYCHLGH). Cysteine 215, histidine 240, and glutamate 244 together coordinate Zn(2+). The 'KMSKS' region signature appears at 272–276 (KMSKS). Lysine 275 contributes to the ATP binding site.

This sequence belongs to the class-I aminoacyl-tRNA synthetase family. As to quaternary structure, monomer. Zn(2+) is required as a cofactor.

The protein localises to the cytoplasm. It carries out the reaction tRNA(Cys) + L-cysteine + ATP = L-cysteinyl-tRNA(Cys) + AMP + diphosphate. This Microcystis aeruginosa (strain NIES-843 / IAM M-2473) protein is Cysteine--tRNA ligase.